The primary structure comprises 435 residues: MKKASIITYGCQMNVNESAKIKKIFQNLGYDVTEEIDNADAVFLNTCTVREGAATQIFGKLGELKALKEKRGTIIGVTGCFAQEQGEELVKKFPIIDIVMGNQNIGRIPQAIEKIENNESTHEVYTDNEDELPPRLDAEFGSDQTASISITYGCNNFCTFCIVPYVRGRERSVPLEEIVKDVEQYVKKGAKEIVLLGQNVNSYGKDFKNGDNFAKLLDEICKVEGDYIVRFVSPHPRDFTDDVIEVIAKNKKISKCLHLPLQSGSSQILKKMRRGYTKEKYLALVDKIKSKIPGVALTADIIVGFPGETEEDFLDTIDVVQKVSFDNSYMFMYSIRKGTKAATMDNQIEESVKKERLQRLMEVQNKCSFYESSKYKGRIVKVLVEGPSKKNKEVLSGRTSTNKIVLFRGNLALKGQFINVKINECKTWTLYGEIV.

One can recognise an MTTase N-terminal domain in the interval 2–117; that stretch reads KKASIITYGC…IPQAIEKIEN (116 aa). [4Fe-4S] cluster is bound by residues Cys11, Cys47, Cys80, Cys154, Cys158, and Cys161. Residues 140 to 370 form the Radical SAM core domain; it reads FGSDQTASIS…MEVQNKCSFY (231 aa). In terms of domain architecture, TRAM spans 373–435; that stretch reads SKYKGRIVKV…KTWTLYGEIV (63 aa).

It belongs to the methylthiotransferase family. MiaB subfamily. As to quaternary structure, monomer. Requires [4Fe-4S] cluster as cofactor.

The protein resides in the cytoplasm. It carries out the reaction N(6)-dimethylallyladenosine(37) in tRNA + (sulfur carrier)-SH + AH2 + 2 S-adenosyl-L-methionine = 2-methylsulfanyl-N(6)-dimethylallyladenosine(37) in tRNA + (sulfur carrier)-H + 5'-deoxyadenosine + L-methionine + A + S-adenosyl-L-homocysteine + 2 H(+). Catalyzes the methylthiolation of N6-(dimethylallyl)adenosine (i(6)A), leading to the formation of 2-methylthio-N6-(dimethylallyl)adenosine (ms(2)i(6)A) at position 37 in tRNAs that read codons beginning with uridine. The protein is tRNA-2-methylthio-N(6)-dimethylallyladenosine synthase of Fusobacterium nucleatum subsp. nucleatum (strain ATCC 25586 / DSM 15643 / BCRC 10681 / CIP 101130 / JCM 8532 / KCTC 2640 / LMG 13131 / VPI 4355).